The sequence spans 1046 residues: Translation initiation factor IF-2 (1046 aa).

The tract at residues 49 to 450 (ALQQGNGGKA…GVMLPRGNGQ (402 aa)) is disordered. Composition is skewed to low complexity over residues 57 to 80 (KAAP…ARPA) and 89 to 106 (PAAA…AAPA). Residues 107–128 (APGPRPGPKPAPRPAPAAPAPA) show a composition bias toward pro residues. The span at 129 to 169 (APEFTAPPSAPAAPAAAASGPRPGARPGAPKPGGARPATPG) shows a compositional bias: low complexity. A compositionally biased stretch (basic and acidic residues) spans 177-194 (RGERTDRGDRGDRGDRQG). The segment covering 195–214 (AARPGGQAPRPGARPAGPRP) has biased composition (low complexity). Gly residues-rich tracts occupy residues 239 to 248 (PRPGGAGAPG) and 266 to 280 (GGPG…GPGG). Residues 302–318 (GNRPNPGMMPQRPAAGP) show a composition bias toward low complexity. Positions 319–414 (RPGGGGPGGR…GTQGAFGRPG (96 aa)) are enriched in gly residues. The segment covering 418–427 (RRGRKSKRQR) has biased composition (basic residues). Positions 539–711 (ARPPVVTVMG…VVLTADASLD (173 aa)) constitute a tr-type G domain. The interval 548-555 (GHVDHGKT) is G1. 548-555 (GHVDHGKT) is a GTP binding site. Residues 573 to 577 (GITQH) form a G2 region. Positions 598-601 (DTPG) are G3. Residues 598-602 (DTPGH) and 652-655 (NKID) each bind GTP. Positions 652–655 (NKID) are G4. The segment at 688–690 (SAK) is G5.

The protein belongs to the TRAFAC class translation factor GTPase superfamily. Classic translation factor GTPase family. IF-2 subfamily.

Its subcellular location is the cytoplasm. One of the essential components for the initiation of protein synthesis. Protects formylmethionyl-tRNA from spontaneous hydrolysis and promotes its binding to the 30S ribosomal subunits. Also involved in the hydrolysis of GTP during the formation of the 70S ribosomal complex. The protein is Translation initiation factor IF-2 of Streptomyces avermitilis (strain ATCC 31267 / DSM 46492 / JCM 5070 / NBRC 14893 / NCIMB 12804 / NRRL 8165 / MA-4680).